The chain runs to 650 residues: Amyloid beta precursor like protein 1 (650 aa).

Residues 1–38 form the signal peptide; sequence MGPASPAARGLSRRPGQPPLPLLLPLLLLLLRAQPAIG. The Extracellular segment spans residues 39-580; sequence SLAGGSPGAA…APAGTGVSRE (542 aa). Positions 50-146 are GFLD subdomain; that stretch reads APGSAQVAGL…PFRCLPGEFV (97 aa). The region spanning 50-212 is the E1 domain; it reads APGSAQVAGL…RGVEYVCCPP (163 aa). Intrachain disulfides connect C60-C84, C95-C140, C120-C128, C156-C210, C167-C197, and C181-C209. A cuBD subdomain region spans residues 154 to 212; it reads EGCRFLHQERMDQCESSTRRHQEAQEACSSQGLILHGSGMLLPCGSDRFRGVEYVCCPP. H174 provides a ligand contact to Cu(2+). Zn(2+)-binding residues include E206, C209, and C210. The tract at residues 214–287 is disordered; that stretch reads GTPDPSGTAV…LAVVGKVTPT (74 aa). O-linked (GalNAc...) threonine glycosylation occurs at T215. S227 carries an O-linked (GalNAc...) serine glycan. T228 is a glycosylation site (O-linked (GalNAc...) threonine). The tract at residues 285 to 305 is O-glycosylated at three sites; sequence TPTPRPTDGVDIYFGMPGEIS. The 192-residue stretch at 293 to 484 folds into the E2 domain; that stretch reads GVDIYFGMPG…QELRPQIQEL (192 aa). 2 heparin-binding regions span residues 310-342 and 410-441; these read FLRA…SKNL and LLAL…DPEK. N-linked (GlcNAc...) asparagine glycosylation occurs at N337. Residues 442–459 form a collagen-binding region; it reads AQQMRFQVHTHLQVIEER. An N-linked (GlcNAc...) asparagine glycan is attached at N461. A disordered region spans residues 492-546; the sequence is PSELEAPAPGGSSEDKGGLQPPDSKDDTPMTLPKGSTEQDAASPEKEKMNPLEQY. Basic and acidic residues-rich tracts occupy residues 504–519 and 534–546; these read SEDK…KDDT and SPEK…LEQY. N-linked (GlcNAc...) asparagine glycosylation occurs at N551. H561 is a Cu(2+) binding site. A Zn(2+)-binding site is contributed by H561. Residues 581–603 traverse the membrane as a helical segment; it reads AVSGLLIMGAGGGSLIVLSMLLL. The short motif at 604 to 615 is the Basolateral sorting signal element; it reads RRKKPYGAISHG. At 604–650 the chain is on the cytoplasmic side; it reads RRKKPYGAISHGVVEVDPMLTLEEQQLRELQRHGYENPTYRFLEERP. Positions 632 to 649 are interaction with DAB1; that stretch reads ELQRHGYENPTYRFLEER. The tract at residues 636 to 650 is interaction with DAB2; the sequence is HGYENPTYRFLEERP. Residues 640 to 643 carry the Clathrin-binding motif; the sequence is NPTY. An NPXY motif; contains endocytosis signal motif is present at residues 640–643; sequence NPTY.

This sequence belongs to the APP family. As to quaternary structure, monomer and homodimer. Heparin binding promotes homodimerization. Binds, via its C-terminus, to the PID domain of several cytoplasmic proteins, including APBB and APBA family members, MAPK8IP1 and DAB1. Binding to Dab1 inhibits its serine phosphorylation. Interacts with CPEB1. Interacts (via NPXY motif) with DAB2 (via PID domain); the interaction is impaired by tyrosine phosphorylation of the NPXY motif. Interacts (via NPXY motif) with DAB1. Post-translationally, proteolytically cleaved by caspases during neuronal apoptosis. Cleaved, in vitro, at Asp-620 by caspase-3. N- and O-glycosylated. O-glycosylation with core 1 or possibly core 8 glycans. Glycosylation on Ser-227 is the preferred site to Thr-228. As to expression, expressed in the cerebral cortex where it is localized to the postsynaptic density (PSD).

The protein localises to the cell membrane. It is found in the cytoplasm. Its function is as follows. May play a role in postsynaptic function. The C-terminal gamma-secretase processed fragment, ALID1, activates transcription activation through APBB1 (Fe65) binding. Couples to JIP signal transduction through C-terminal binding. May interact with cellular G-protein signaling pathways. Can regulate neurite outgrowth through binding to components of the extracellular matrix such as heparin and collagen I. In terms of biological role, the gamma-CTF peptide, C30, is a potent enhancer of neuronal apoptosis. In Homo sapiens (Human), this protein is Amyloid beta precursor like protein 1 (APLP1).